The chain runs to 285 residues: Meiotically up-regulated gene 74 protein (285 aa).

The protein resides in the cytoplasm. Functionally, has a role in meiosis. In Schizosaccharomyces pombe (strain 972 / ATCC 24843) (Fission yeast), this protein is Meiotically up-regulated gene 74 protein (mug74).